Reading from the N-terminus, the 130-residue chain is Hypocretin neuropeptide precursor (130 aa).

Positions 1-32 are cleaved as a signal peptide; the sequence is MNPPSTKVPWAAVTLLLLLLLPPALLSPGAAA. Q33 carries the pyrrolidone carboxylic acid modification. 2 disulfides stabilise this stretch: C38-C44 and C39-C46. Leucine amide is present on L65. M96 carries the post-translational modification Methionine amide. Residues 97–130 constitute a propeptide, removed in mature form; sequence GRRAGAEPAPRPCPGRRCPVVAVPSAAPGGRSGV.

The protein belongs to the orexin family. In terms of processing, specific enzymatic cleavages at paired basic residues yield the different active peptides.

Its subcellular location is the rough endoplasmic reticulum. It is found in the cytoplasmic vesicle. The protein resides in the synapse. Its function is as follows. Neuropeptides that play a significant role in the regulation of food intake and sleep-wakefulness, possibly by coordinating the complex behavioral and physiologic responses of these complementary homeostatic functions. A broader role in the homeostatic regulation of energy metabolism, autonomic function, hormonal balance and the regulation of body fluids, is also suggested. Binds to orexin receptors HCRTR1/OX1R and HCRTR2/OX2R with a high affinity. Stimulates food intake. Modulates pituitary luteinizing hormone secretion in an ovarian steroid-dependent manner. Functionally, binds to orexin receptor HCRTR2/OX2R only. Stimulates food intake. Modulates pituitary luteinizing hormone secretion in an ovarian steroid-dependent manner. The chain is Hypocretin neuropeptide precursor (HCRT) from Canis lupus familiaris (Dog).